A 479-amino-acid chain; its full sequence is mRNA export factor ICP27 homolog (479 aa).

Low complexity predominate over residues 1–15 (MVPSQRLSRTSSISS). Disordered stretches follow at residues 1–77 (MVPS…PSSV) and 91–210 (KKWD…NKPW). The span at 35–44 (TDCDMDPMEG) shows a compositional bias: acidic residues. A compositionally biased stretch (basic and acidic residues) spans 132 to 142 (EVHGCTDESYG). Zn(2+) is bound by residues cysteine 354, histidine 445, cysteine 449, and cysteine 454. The segment at 354-454 (CFLPNTRDYN…HTRDCRSASC (101 aa)) adopts a CHC2-type zinc-finger fold.

Belongs to the HHV-1 ICP27 protein family. In terms of assembly, interacts with host XPO1 and with the XPO1 export pathway components small GTPase RAN and nucleoporin NUP214. Interacts with host SPEN, OTT1 and OTT3. Interacts with host SRSF1, SRSF3, SRSF7 and SRPK1. Interacts with host DHX9; this interaction may have an inhibitory effect on virion production. Interacts (via N-terminus) with host NXF1; this interaction plays a role in mRNA export. Phosphorylated by cellular protein kinase CK2.

The protein resides in the host nucleus. It localises to the host cytoplasm. Promotes the nuclear export of a subset of early and late viral mRNAs by interacting with mRNAs and cellular export proteins. Additionally may prevent the establishment of cellular antiviral state, by acting as an alternative splicing factor for cellular RNAs such as STAT1, resulting in a STAT1 mRNA incapable of producing the STAT1alpha isoform. The polypeptide is mRNA export factor ICP27 homolog (Homo sapiens (Human)).